Consider the following 1575-residue polypeptide: Lysophospholipase NTE1 (1575 aa).

Residues 1–56 are disordered; that stretch reads MNLTTTMPAAVAPDPPAQLAVSSRSLSDSSDAAGASRTSSSCRASSPSHCPTHAWN. The Cytoplasmic portion of the chain corresponds to 1–99; that stretch reads MNLTTTMPAA…TLSPPNLLQG (99 aa). Over residues 19–48 the composition is skewed to low complexity; the sequence is LAVSSRSLSDSSDAAGASRTSSSCRASSPS. The chain crosses the membrane as a helical span at residues 100–120; it reads IVSQLAMASYIGRLLLYLFQV. At 121–151 the chain is on the lumenal side; the sequence is VPSLLYWAITFTTITVPTALFTLFSMSLTFT. A helical membrane pass occupies residues 152–172; that stretch reads MNFTTLLIIVLLLVSTVSWFI. The Cytoplasmic segment spans residues 173–1575; it reads RYRFLNIYSR…RTMAPRRASI (1403 aa). Disordered stretches follow at residues 339-425 and 568-587; these read DMES…AKSV and GSAS…VSPG. Over residues 409–424 the composition is skewed to basic residues; that stretch reads RGHRRKRPSRPKRAKS. A nucleoside 3',5'-cyclic phosphate contacts are provided by residues 737–856 and 894–1014; these read GGTS…TSYR and RLTT…IAQR. The region spanning 1272-1436 is the PNPLA domain; that stretch reads LVLGGGGARG…VDNLTVARMK (165 aa). A GXGXXG motif is present at residues 1276-1281; the sequence is GGGARG. A GXSXG motif is present at residues 1303–1307; sequence GTSIG. Serine 1305 (nucleophile) is an active-site residue. Aspartate 1423 (proton acceptor) is an active-site residue. Residues 1423–1425 carry the DGA/G motif; sequence DGG.

Belongs to the NTE family.

It is found in the endoplasmic reticulum membrane. The catalysed reaction is a 1-acyl-sn-glycero-3-phosphocholine + H2O = sn-glycerol 3-phosphocholine + a fatty acid + H(+). Inhibited by organophosphorus esters. Functionally, intracellular phospholipase B that catalyzes the double deacylation of phosphatidylcholine (PC) to glycerophosphocholine (GroPCho). Plays an important role in membrane lipid homeostasis. Responsible for the rapid PC turnover in response to inositol, elevated temperatures, or when choline is present in the growth medium. This is Lysophospholipase NTE1 (NTE1) from Coccidioides immitis (strain RS) (Valley fever fungus).